A 428-amino-acid polypeptide reads, in one-letter code: UDP-N-acetylglucosamine 1-carboxyvinyltransferase (428 aa).

25–26 (KN) is a phosphoenolpyruvate binding site. R102 is a binding site for UDP-N-acetyl-alpha-D-glucosamine. C126 serves as the catalytic Proton donor. C126 bears the 2-(S-cysteinyl)pyruvic acid O-phosphothioketal mark. The UDP-N-acetyl-alpha-D-glucosamine site is built by D316 and V338.

It belongs to the EPSP synthase family. MurA subfamily.

The protein localises to the cytoplasm. It catalyses the reaction phosphoenolpyruvate + UDP-N-acetyl-alpha-D-glucosamine = UDP-N-acetyl-3-O-(1-carboxyvinyl)-alpha-D-glucosamine + phosphate. The protein operates within cell wall biogenesis; peptidoglycan biosynthesis. Cell wall formation. Adds enolpyruvyl to UDP-N-acetylglucosamine. This Anaplasma marginale (strain Florida) protein is UDP-N-acetylglucosamine 1-carboxyvinyltransferase.